Here is a 114-residue protein sequence, read N- to C-terminus: Nucleoid-associated protein PCC8801_2554 (114 aa).

The protein belongs to the YbaB/EbfC family. As to quaternary structure, homodimer.

The protein localises to the cytoplasm. The protein resides in the nucleoid. In terms of biological role, binds to DNA and alters its conformation. May be involved in regulation of gene expression, nucleoid organization and DNA protection. This Rippkaea orientalis (strain PCC 8801 / RF-1) (Cyanothece sp. (strain PCC 8801)) protein is Nucleoid-associated protein PCC8801_2554.